The primary structure comprises 120 residues: NAD(P)H-quinone oxidoreductase subunit 3, chloroplastic (120 aa).

The next 3 membrane-spanning stretches (helical) occupy residues 7-27 (YDYFFVFLLIISFFSILIFSL), 64-84 (MFALVFVIFDVETVFLYPWAM), and 89-109 (FGISSFIEALIFILILIIGLV).

It belongs to the complex I subunit 3 family. In terms of assembly, NDH is composed of at least 16 different subunits, 5 of which are encoded in the nucleus.

Its subcellular location is the plastid. The protein resides in the chloroplast thylakoid membrane. It carries out the reaction a plastoquinone + NADH + (n+1) H(+)(in) = a plastoquinol + NAD(+) + n H(+)(out). The enzyme catalyses a plastoquinone + NADPH + (n+1) H(+)(in) = a plastoquinol + NADP(+) + n H(+)(out). Functionally, NDH shuttles electrons from NAD(P)H:plastoquinone, via FMN and iron-sulfur (Fe-S) centers, to quinones in the photosynthetic chain and possibly in a chloroplast respiratory chain. The immediate electron acceptor for the enzyme in this species is believed to be plastoquinone. Couples the redox reaction to proton translocation, and thus conserves the redox energy in a proton gradient. This chain is NAD(P)H-quinone oxidoreductase subunit 3, chloroplastic, found in Marchantia polymorpha (Common liverwort).